A 62-amino-acid polypeptide reads, in one-letter code: Cecropin-A (62 aa).

The signal sequence occupies residues 1-20 (MNLVKILFCVFACLVFTVTA). A propeptide spans 21–24 (VPEP) (removed by a dipeptidylpeptidase). Thr-60 is subject to Threonine amide.

This sequence belongs to the cecropin family.

The protein localises to the secreted. Its function is as follows. Has antibacterial activity. The polypeptide is Cecropin-A (Trichoplusia ni (Cabbage looper)).